A 599-amino-acid chain; its full sequence is Nucleoporin p58/p45 (599 aa).

5 consecutive repeat copies span residues 7–8 (FG), 30–31 (FG), 44–45 (FG), 63–64 (FG), and 68–69 (FG). Residues 7–579 (FGSGTLGSTT…VSNPASAGFG (573 aa)) form a 14 X 2 AA repeats of F-G region. A disordered region spans residues 213–247 (NEGLGGIDFSSSSDKKSDKTGTRPEDSKALKDENL). The segment covering 225-246 (SDKKSDKTGTRPEDSKALKDEN) has biased composition (basic and acidic residues). Coiled-coil stretches lie at residues 256–276 (ENLQ…SRMS) and 314–381 (ETAQ…SHIT). Thr331 bears the Phosphothreonine mark. Tandem repeats lie at residues 488-489 (FG), 492-493 (FG), 513-514 (FG), 519-520 (FG), 529-530 (FG), 531-532 (FG), 545-546 (FG), 568-569 (FG), and 578-579 (FG). Residues 579 to 599 (GTGGQLLQLKKPPAGNKRGKR) are disordered.

It belongs to the NUP58 family. As to quaternary structure, component of the p62 complex, a complex at least composed of NUP62, NUP54, and NUP58. Interacts with NUTF2. Interacts with SRP1-alpha and Importin p97 proteins when they are together, but not with SRP1-alpha protein alone. O-glycosylated.

It is found in the nucleus. The protein resides in the nuclear pore complex. The protein localises to the nucleus membrane. Functionally, component of the nuclear pore complex, a complex required for the trafficking across the nuclear membrane. The protein is Nucleoporin p58/p45 of Homo sapiens (Human).